Here is a 398-residue protein sequence, read N- to C-terminus: Cyclin-dependent kinase D-1 (398 aa).

The Protein kinase domain maps to 11–291 (YLKREVLGQG…IQQALKHRYF (281 aa)). ATP contacts are provided by residues 17-25 (LGQGTYGVV) and lysine 40. Phosphotyrosine is present on tyrosine 22. Aspartate 133 acts as the Proton acceptor in catalysis. At serine 160 the chain carries Phosphoserine. Threonine 166 carries the post-translational modification Phosphothreonine. A disordered region spans residues 296 to 318 (SPTDPLKLPRPVSKQDAKSSDSK). Over residues 308–318 (SKQDAKSSDSK) the composition is skewed to basic and acidic residues.

This sequence belongs to the protein kinase superfamily. CMGC Ser/Thr protein kinase family. CDC2/CDKX subfamily. Post-translationally, autophosphorylated. As to expression, expressed at low levels in suspension cell culture, but not in plant organs.

The protein resides in the nucleus. It catalyses the reaction L-seryl-[protein] + ATP = O-phospho-L-seryl-[protein] + ADP + H(+). The enzyme catalyses L-threonyl-[protein] + ATP = O-phospho-L-threonyl-[protein] + ADP + H(+). The catalysed reaction is [DNA-directed RNA polymerase] + ATP = phospho-[DNA-directed RNA polymerase] + ADP + H(+). The polypeptide is Cyclin-dependent kinase D-1 (CDKD-1) (Arabidopsis thaliana (Mouse-ear cress)).